We begin with the raw amino-acid sequence, 208 residues long: Thymidylate kinase (208 aa).

ATP is bound at residue 10–17; it reads GPEGSGKT.

It belongs to the thymidylate kinase family.

The catalysed reaction is dTMP + ATP = dTDP + ADP. Functionally, phosphorylation of dTMP to form dTDP in both de novo and salvage pathways of dTTP synthesis. The protein is Thymidylate kinase of Bacillus mycoides (strain KBAB4) (Bacillus weihenstephanensis).